Here is a 331-residue protein sequence, read N- to C-terminus: C-type lectin domain family 4 member K (331 aa).

Residues 1 to 41 (MPEAEMKEEAPEAHFTVDKQNISLWPREPPPKQDLSPVLRK) lie on the Cytoplasmic side of the membrane. A helical; Signal-anchor for type II membrane protein membrane pass occupies residues 42-62 (PLCICVAFTCLALVLVTSIVL). Topologically, residues 63-331 (QAVFYPRLMG…CKRPYVQTTE (269 aa)) are extracellular. N-linked (GlcNAc...) asparagine glycosylation is found at asparagine 90 and asparagine 116. Positions 106-197 (DDAEVQMQIV…LKQQSDILEM (92 aa)) form a coiled coil. Residues 205–323 (FSGNFYYFSR…CDNTFLFICK (119 aa)) form the C-type lectin domain. 2 disulfides stabilise this stretch: cysteine 226–cysteine 322 and cysteine 298–cysteine 314.

As to quaternary structure, homotrimer. Expressed by Langerhans cells. Expressed in dendritic cells and by scattered cells in lymph nodes and spleen. Also detected in some non-lymphoid tissues such as lung, liver and heart.

The protein localises to the membrane. In terms of biological role, calcium-dependent lectin displaying mannose-binding specificity. Induces the formation of Birbeck granules (BGs); is a potent regulator of membrane superimposition and zippering. Binds to sulfated as well as mannosylated glycans, keratan sulfate (KS) and beta-glucans. Facilitates uptake of antigens and is involved in the routing and/or processing of antigen for presentation to T cells. This Mus musculus (Mouse) protein is C-type lectin domain family 4 member K (Cd207).